We begin with the raw amino-acid sequence, 389 residues long: Cytochrome B translational activator CBS2 (389 aa).

Its subcellular location is the mitochondrion. In terms of biological role, translational activator of cytochrome b. The cytochrome b (coB) leader RNA may represent the target sequence for CBS1 and/ or CBS2. This is Cytochrome B translational activator CBS2 (CBS2) from Saccharomyces cerevisiae (strain ATCC 204508 / S288c) (Baker's yeast).